A 1021-amino-acid chain; its full sequence is Nonribosomal peptide synthetase asaC (1021 aa).

Residues 17–418 (RHHVRTSPNA…ARADNMVKIR (402 aa)) form an adenylation (A) domain region. Positions 528–603 (KDAGDSVTWL…GLASVIDAGH (76 aa)) constitute a Carrier domain. O-(pantetheine 4'-phosphoryl)serine is present on serine 563. The interval 646–888 (LTGATGFLGT…MIPVDFITTA (243 aa)) is short-chain dehydrogenase/reductase (R) domain.

Belongs to the NRP synthetase family.

Its pathway is secondary metabolite biosynthesis. In terms of biological role, nonribosomal peptide synthetase; part of the gene cluster that mediates the biosynthesis of aspergillic acid, a hydroxamic acid-containing pyrazinone with aliphatic side chains that originates from leucine (Leu) and isoleucine (Ile). Aspergillic acid has antibiotic properties and was shown to be lethal to mice. The first step in the pathway is the production of deoxyaspergillic acid via a condensation between the Ile amine and the Leu carboxylic acid, followed by a reductive release from the protein forming the dipeptide aldehyde NH(2)-Leu-Ile-CHO, which could undergo an intermolecular cyclization resulting in a dihydropyrazinone. As the NRPS asaC lacks a condensation domain, it is improbable that it is responsible for condensation of Leu and Ile. One possibility is that asaC acts on a previously condensed dipeptide and functions as a Leu-Ile reductase to yield deoxyaspergillic acid. After asaC forms deoxyaspergillic acid, the cytochrome P450 asaD oxidizes the pyrazinone to the hydroxamic acid-containing bioactive metabolite aspergillic acid. The hydroxylase/desaturase asaB can then convert aspergillic acid to hydroxyaspergillic acid. Both aspergillic acid and hydroxyaspergillic acid can form complexes with iron producing ferriaspergillin analogs. The polypeptide is Nonribosomal peptide synthetase asaC (Aspergillus flavus (strain ATCC 200026 / FGSC A1120 / IAM 13836 / NRRL 3357 / JCM 12722 / SRRC 167)).